The chain runs to 147 residues: Molybdopterin synthase catalytic subunit 1 (147 aa).

Substrate is bound by residues Asn-43–Arg-45, His-109–Arg-110, Lys-125, and Lys-132–Glu-134.

The protein belongs to the MoaE family. In terms of assembly, heterotetramer of 2 MoaD subunits and 2 MoaE subunits. Also stable as homodimer. The enzyme changes between these two forms during catalysis.

It carries out the reaction 2 [molybdopterin-synthase sulfur-carrier protein]-C-terminal-Gly-aminoethanethioate + cyclic pyranopterin phosphate + H2O = molybdopterin + 2 [molybdopterin-synthase sulfur-carrier protein]-C-terminal Gly-Gly + 2 H(+). Its pathway is cofactor biosynthesis; molybdopterin biosynthesis. Its function is as follows. Converts molybdopterin precursor Z into molybdopterin. This requires the incorporation of two sulfur atoms into precursor Z to generate a dithiolene group. The sulfur is provided by MoaD. This chain is Molybdopterin synthase catalytic subunit 1 (moaE1), found in Mycobacterium tuberculosis (strain ATCC 25618 / H37Rv).